The following is a 272-amino-acid chain: Bis(5'-nucleosyl)-tetraphosphatase, symmetrical (272 aa).

It belongs to the Ap4A hydrolase family.

It carries out the reaction P(1),P(4)-bis(5'-adenosyl) tetraphosphate + H2O = 2 ADP + 2 H(+). Its function is as follows. Hydrolyzes diadenosine 5',5'''-P1,P4-tetraphosphate to yield ADP. In Ectopseudomonas mendocina (strain ymp) (Pseudomonas mendocina), this protein is Bis(5'-nucleosyl)-tetraphosphatase, symmetrical.